A 350-amino-acid chain; its full sequence is Ion-translocating oxidoreductase complex subunit D (350 aa).

The next 3 helical transmembrane spans lie at 25-45, 89-109, and 124-144; these read ALCLIPGILVQTLFFGFGSLI, IPPLAPWWLVVIGSLFAIIIV, and AMAGYVVLLVSFPLQMTSWVA. Thr185 carries the FMN phosphoryl threonine modification. 5 consecutive transmembrane segments (helical) span residues 212-232, 239-259, 265-285, 298-318, and 319-339; these read SYGVGWFWVNLAYLAGGLVLL, WHISVGILAALFVCASFGFLI, VSPLFHWFSGGTMLAVFFIAT, LIFGASIGIIIYLIRTYGGYP, and DAVAFAVLLANMCAPFIDHYV.

Belongs to the NqrB/RnfD family. In terms of assembly, the complex is composed of six subunits: RnfA, RnfB, RnfC, RnfD, RnfE and RnfG. FMN serves as cofactor.

The protein resides in the cell inner membrane. In terms of biological role, part of a membrane-bound complex that couples electron transfer with translocation of ions across the membrane. This is Ion-translocating oxidoreductase complex subunit D from Shewanella denitrificans (strain OS217 / ATCC BAA-1090 / DSM 15013).